The chain runs to 273 residues: uncharacterized protein (273 aa).

This is an uncharacterized protein from Acanthamoeba polyphaga (Amoeba).